Reading from the N-terminus, the 839-residue chain is Phosphatidylinositol-glycan-specific phospholipase D (839 aa).

The N-terminal stretch at 1-23 (MSAFRFWSGLLMLLGFLCPRSSP) is a signal peptide. Asn-94, Asn-271, Asn-292, Asn-307, and Asn-321 each carry an N-linked (GlcNAc...) asparagine glycan. FG-GAP repeat units lie at residues 365–427 (SSPA…GLPR), 434–496 (KEAH…GQLS), 498–558 (SPNV…YSSR), 562–622 (NVEA…SPGR), 632–692 (QSWF…GSTR), 703–769 (SLLS…TVGD), and 787–839 (QYVL…LGQD). 3 N-linked (GlcNAc...) asparagine glycosylation sites follow: Asn-500, Asn-590, and Asn-658.

This sequence belongs to the GPLD1 family. In terms of assembly, monomer. In terms of processing, glycosylated.

It is found in the secreted. It carries out the reaction a 6-(alpha-D-glucosaminyl)-1-(1,2-diacyl-sn-glycero-3-phospho)-1D-myo-inositol + H2O = 6-(alpha-D-glucosaminyl)-1D-myo-inositol + a 1,2-diacyl-sn-glycero-3-phosphate + H(+). Its function is as follows. This protein hydrolyzes the inositol phosphate linkage in proteins anchored by phosphatidylinositol glycans (GPI-anchor) thus releasing these proteins from the membrane. The sequence is that of Phosphatidylinositol-glycan-specific phospholipase D (GPLD1) from Bos taurus (Bovine).